The chain runs to 399 residues: Protein IQ-DOMAIN 25 (399 aa).

The Nuclear localization signal motif lies at 1–8; sequence MRKNLTKL. Calmodulin-binding regions lie at residues 81–91 and 99–110; these read KERRTHAIAVA and DAAVAAAKAAAA. 2 consecutive IQ domains span residues 130–158 and 159–181; these read EHRA…GVVK and IQAL…SMEA. 3 disordered regions span residues 198–219, 262–302, and 346–377; these read NGNA…ENRN, SPLS…SPAR, and LRSH…VRMQ. Positions 285-294 are enriched in polar residues; the sequence is KFPTAQSTPR.

The protein belongs to the IQD family. In terms of assembly, binds to multiple calmodulin (CaM) in the presence of Ca(2+) and CaM-like proteins.

The protein resides in the nucleus. The protein localises to the cell membrane. Its function is as follows. May be involved in cooperative interactions with calmodulins or calmodulin-like proteins. Recruits calmodulin proteins to microtubules, thus being a potential scaffold in cellular signaling and trafficking. May associate with nucleic acids and regulate gene expression at the transcriptional or post-transcriptional level. The polypeptide is Protein IQ-DOMAIN 25 (Arabidopsis thaliana (Mouse-ear cress)).